A 41-amino-acid chain; its full sequence is Hadrurin (41 aa).

This sequence belongs to the non-disulfide-bridged peptide (NDBP) superfamily. Long chain multifunctional peptide (group 2) family. In terms of tissue distribution, expressed by the venom gland.

Its subcellular location is the secreted. Its function is as follows. Antimicrobial activity against S.typhimurium, K.pneumoniae, E.cloacae, P.aeruginosa, E.coli and S.marcescens. Also shows hemolytic activity when tested in human erythrocytes. This is Hadrurin from Hoffmannihadrurus aztecus (Mexican scorpion).